Here is a 545-residue protein sequence, read N- to C-terminus: GPI transamidase component PIG-T homolog (545 aa).

The N-terminal stretch at M1–A22 is a signal peptide. At T23–N493 the chain is on the lumenal side. Residues N168, N227, N336, N391, and N467 are each glycosylated (N-linked (GlcNAc...) asparagine). The chain crosses the membrane as a helical span at residues V494–T514. Topologically, residues R515–G545 are cytoplasmic.

This sequence belongs to the PIGT family. In terms of assembly, forms a complex with PIG-S homolog, PIG-U homolog and GPI8. In terms of processing, the disulfide bond between PIGK/GPI8 and PIGT is important for normal enzyme activity.

Its subcellular location is the endoplasmic reticulum membrane. Its pathway is glycolipid biosynthesis; glycosylphosphatidylinositol-anchor biosynthesis. Component of the GPI transamidase complex. Involved in transfer of GPI to proteins. The chain is GPI transamidase component PIG-T homolog (gpi16) from Schizosaccharomyces pombe (strain 972 / ATCC 24843) (Fission yeast).